The sequence spans 305 residues: Phosphoribosylaminoimidazole-succinocarboxamide synthase (305 aa).

This sequence belongs to the SAICAR synthetase family.

It catalyses the reaction 5-amino-1-(5-phospho-D-ribosyl)imidazole-4-carboxylate + L-aspartate + ATP = (2S)-2-[5-amino-1-(5-phospho-beta-D-ribosyl)imidazole-4-carboxamido]succinate + ADP + phosphate + 2 H(+). It participates in purine metabolism; IMP biosynthesis via de novo pathway; 5-amino-1-(5-phospho-D-ribosyl)imidazole-4-carboxamide from 5-amino-1-(5-phospho-D-ribosyl)imidazole-4-carboxylate: step 1/2. In Tropheryma whipplei (strain Twist) (Whipple's bacillus), this protein is Phosphoribosylaminoimidazole-succinocarboxamide synthase.